We begin with the raw amino-acid sequence, 367 residues long: Phosphoribosylaminoimidazole-succinocarboxamide synthase (367 aa).

The protein belongs to the SAICAR synthetase family.

It carries out the reaction 5-amino-1-(5-phospho-D-ribosyl)imidazole-4-carboxylate + L-aspartate + ATP = (2S)-2-[5-amino-1-(5-phospho-beta-D-ribosyl)imidazole-4-carboxamido]succinate + ADP + phosphate + 2 H(+). It participates in purine metabolism; IMP biosynthesis via de novo pathway; 5-amino-1-(5-phospho-D-ribosyl)imidazole-4-carboxamide from 5-amino-1-(5-phospho-D-ribosyl)imidazole-4-carboxylate: step 1/2. The protein is Phosphoribosylaminoimidazole-succinocarboxamide synthase of Shewanella amazonensis (strain ATCC BAA-1098 / SB2B).